The following is a 382-amino-acid chain: Queuine tRNA-ribosyltransferase (382 aa).

Catalysis depends on aspartate 94, which acts as the Proton acceptor. Substrate-binding positions include 94-98 (DSGGF), aspartate 148, glutamine 192, and glycine 219. An RNA binding region spans residues 250-256 (GVGKPED). Aspartate 269 acts as the Nucleophile in catalysis. The segment at 274–278 (TRNAR) is RNA binding; important for wobble base 34 recognition. Cysteine 307, cysteine 309, cysteine 312, and histidine 338 together coordinate Zn(2+).

This sequence belongs to the queuine tRNA-ribosyltransferase family. As to quaternary structure, homodimer. Within each dimer, one monomer is responsible for RNA recognition and catalysis, while the other monomer binds to the replacement base PreQ1. Requires Zn(2+) as cofactor.

It catalyses the reaction 7-aminomethyl-7-carbaguanine + guanosine(34) in tRNA = 7-aminomethyl-7-carbaguanosine(34) in tRNA + guanine. It participates in tRNA modification; tRNA-queuosine biosynthesis. Its function is as follows. Catalyzes the base-exchange of a guanine (G) residue with the queuine precursor 7-aminomethyl-7-deazaguanine (PreQ1) at position 34 (anticodon wobble position) in tRNAs with GU(N) anticodons (tRNA-Asp, -Asn, -His and -Tyr). Catalysis occurs through a double-displacement mechanism. The nucleophile active site attacks the C1' of nucleotide 34 to detach the guanine base from the RNA, forming a covalent enzyme-RNA intermediate. The proton acceptor active site deprotonates the incoming PreQ1, allowing a nucleophilic attack on the C1' of the ribose to form the product. After dissociation, two additional enzymatic reactions on the tRNA convert PreQ1 to queuine (Q), resulting in the hypermodified nucleoside queuosine (7-(((4,5-cis-dihydroxy-2-cyclopenten-1-yl)amino)methyl)-7-deazaguanosine). In Haemophilus ducreyi (strain 35000HP / ATCC 700724), this protein is Queuine tRNA-ribosyltransferase.